A 185-amino-acid polypeptide reads, in one-letter code: Peptidyl-tRNA hydrolase (185 aa).

Y14 lines the tRNA pocket. H19 serves as the catalytic Proton acceptor. TRNA contacts are provided by F64, N66, and N112.

Belongs to the PTH family. In terms of assembly, monomer.

It is found in the cytoplasm. It carries out the reaction an N-acyl-L-alpha-aminoacyl-tRNA + H2O = an N-acyl-L-amino acid + a tRNA + H(+). Its function is as follows. Hydrolyzes ribosome-free peptidyl-tRNAs (with 1 or more amino acids incorporated), which drop off the ribosome during protein synthesis, or as a result of ribosome stalling. In terms of biological role, catalyzes the release of premature peptidyl moieties from peptidyl-tRNA molecules trapped in stalled 50S ribosomal subunits, and thus maintains levels of free tRNAs and 50S ribosomes. This is Peptidyl-tRNA hydrolase from Lactobacillus johnsonii (strain CNCM I-12250 / La1 / NCC 533).